Reading from the N-terminus, the 227-residue chain is Phosphoribosylformylglycinamidine synthase subunit PurQ (227 aa).

The region spanning 2–226 (KFAVIQFPGS…VQAWKEEQVN (225 aa)) is the Glutamine amidotransferase type-1 domain. Cys-86 functions as the Nucleophile in the catalytic mechanism. Residues His-195 and Glu-197 contribute to the active site.

Part of the FGAM synthase complex composed of 1 PurL, 1 PurQ and 2 PurS subunits.

The protein resides in the cytoplasm. It catalyses the reaction N(2)-formyl-N(1)-(5-phospho-beta-D-ribosyl)glycinamide + L-glutamine + ATP + H2O = 2-formamido-N(1)-(5-O-phospho-beta-D-ribosyl)acetamidine + L-glutamate + ADP + phosphate + H(+). The enzyme catalyses L-glutamine + H2O = L-glutamate + NH4(+). It functions in the pathway purine metabolism; IMP biosynthesis via de novo pathway; 5-amino-1-(5-phospho-D-ribosyl)imidazole from N(2)-formyl-N(1)-(5-phospho-D-ribosyl)glycinamide: step 1/2. Part of the phosphoribosylformylglycinamidine synthase complex involved in the purines biosynthetic pathway. Catalyzes the ATP-dependent conversion of formylglycinamide ribonucleotide (FGAR) and glutamine to yield formylglycinamidine ribonucleotide (FGAM) and glutamate. The FGAM synthase complex is composed of three subunits. PurQ produces an ammonia molecule by converting glutamine to glutamate. PurL transfers the ammonia molecule to FGAR to form FGAM in an ATP-dependent manner. PurS interacts with PurQ and PurL and is thought to assist in the transfer of the ammonia molecule from PurQ to PurL. In Listeria welshimeri serovar 6b (strain ATCC 35897 / DSM 20650 / CCUG 15529 / CIP 8149 / NCTC 11857 / SLCC 5334 / V8), this protein is Phosphoribosylformylglycinamidine synthase subunit PurQ.